We begin with the raw amino-acid sequence, 533 residues long: Na(+)/H(+) antiporter NhaB (533 aa).

11 helical membrane passes run 10 to 30, 67 to 87, 96 to 116, 131 to 165, 209 to 229, 247 to 267, 310 to 330, 355 to 375, 396 to 416, 454 to 474, and 481 to 501; these read IGNF…SFLI, PGGL…SQVL, VLLL…LLLF, VSLM…FYSI, LLMH…VGEP, IRMS…CFLV, AFVG…VGLI, EEAL…AVII, LVIF…VFVG, ATPN…APLI, and MVWM…MAIE.

The protein belongs to the NhaB Na(+)/H(+) (TC 2.A.34) antiporter family.

Its subcellular location is the cell inner membrane. It catalyses the reaction 2 Na(+)(in) + 3 H(+)(out) = 2 Na(+)(out) + 3 H(+)(in). Its function is as follows. Na(+)/H(+) antiporter that extrudes sodium in exchange for external protons. In Shewanella sp. (strain MR-4), this protein is Na(+)/H(+) antiporter NhaB.